The following is a 198-amino-acid chain: Probable molybdenum cofactor guanylyltransferase (198 aa).

GTP is bound by residues 11-13 (LAG), Lys-23, Asp-71, and Asp-102. A Mg(2+)-binding site is contributed by Asp-102.

The protein belongs to the MobA family. Requires Mg(2+) as cofactor.

Its subcellular location is the cytoplasm. The catalysed reaction is Mo-molybdopterin + GTP + H(+) = Mo-molybdopterin guanine dinucleotide + diphosphate. In terms of biological role, transfers a GMP moiety from GTP to Mo-molybdopterin (Mo-MPT) cofactor (Moco or molybdenum cofactor) to form Mo-molybdopterin guanine dinucleotide (Mo-MGD) cofactor. This chain is Probable molybdenum cofactor guanylyltransferase, found in Halalkalibacterium halodurans (strain ATCC BAA-125 / DSM 18197 / FERM 7344 / JCM 9153 / C-125) (Bacillus halodurans).